The chain runs to 681 residues: Cadmium, zinc and cobalt-transporting ATPase (681 aa).

The HMA domain maps to Met1–Gln66. Residues Met1–Lys72 lie on the Cytoplasmic side of the membrane. Cd(2+)-binding residues include Cys11 and Cys14. Positions 11 and 14 each coordinate Co(2+). Residues Cys11 and Cys14 each contribute to the Zn(2+) site. The helical transmembrane segment at Pro73–Ile92 threads the bilayer. Topologically, residues His93 to His102 are extracellular. The helical transmembrane segment at Leu103 to Leu124 threads the bilayer. Over Arg125 to Gln131 the chain is Cytoplasmic. The helical transmembrane segment at Phe132–Ala151 threads the bilayer. At His152–Glu154 the chain is on the extracellular side. Residues Ala155–Ala174 form a helical membrane-spanning segment. The Cytoplasmic portion of the chain corresponds to Arg175–Pro308. A helical transmembrane segment spans residues Ala309–Gly327. Topologically, residues Asp328–Trp332 are extracellular. The chain crosses the membrane as a helical span at residues Ile333 to Ile350. The Cytoplasmic portion of the chain corresponds to Ser351–Arg630. Asp388 functions as the 4-aspartylphosphate intermediate in the catalytic mechanism. Mg(2+) contacts are provided by Asp578 and Asp582. The helical transmembrane segment at Ile631 to Ser652 threads the bilayer. Topologically, residues Gly653–Ala660 are extracellular. A helical transmembrane segment spans residues Val661 to Met676. Residues Arg677–Ile681 are Cytoplasmic-facing.

It belongs to the cation transport ATPase (P-type) (TC 3.A.3) family. Type IB subfamily.

The protein localises to the cell membrane. It catalyses the reaction Zn(2+)(in) + ATP + H2O = Zn(2+)(out) + ADP + phosphate + H(+). It carries out the reaction Cd(2+)(in) + ATP + H2O = Cd(2+)(out) + ADP + phosphate + H(+). Its function is as follows. Couples the hydrolysis of ATP with the transport of cadmium, zinc and cobalt out of the cell. The protein is Cadmium, zinc and cobalt-transporting ATPase (cadA) of Helicobacter felis.